A 558-amino-acid polypeptide reads, in one-letter code: Vanin-like protein 1 (558 aa).

Residues 1–22 (MSNTWWWLSVVLLILGLMPGMS) form the signal peptide. A CN hydrolase domain is found at 33 to 299 (YTAGVVEFKQ…RAIYVAQVPK (267 aa)). N-linked (GlcNAc...) asparagine glycosylation is present at asparagine 65. The active-site Proton acceptor is the glutamate 76. Asparagine 103, asparagine 120, and asparagine 128 each carry an N-linked (GlcNAc...) asparagine glycan. Lysine 171 serves as the catalytic Proton donor. Asparagine 180 carries N-linked (GlcNAc...) asparagine glycosylation. The active-site Nucleophile is the cysteine 203. N-linked (GlcNAc...) asparagine glycans are attached at residues asparagine 354 and asparagine 379. Serine 531 is lipidated: GPI-anchor amidated serine. A propeptide spans 532–558 (GSPGLRILGGWLAMPLIILAIARTMSS) (removed in mature form).

It belongs to the carbon-nitrogen hydrolase superfamily. BTD/VNN family. In terms of tissue distribution, expressed in larvae and early pupae. Expressed in third instar larvae.

The protein localises to the cell membrane. This Drosophila melanogaster (Fruit fly) protein is Vanin-like protein 1.